We begin with the raw amino-acid sequence, 168 residues long: ATP synthase subunit b (168 aa).

A helical membrane pass occupies residues 9 to 29 (AIPFGTIAYTLFIFLLLLVML).

Belongs to the ATPase B chain family. F-type ATPases have 2 components, F(1) - the catalytic core - and F(0) - the membrane proton channel. F(1) has five subunits: alpha(3), beta(3), gamma(1), delta(1), epsilon(1). F(0) has three main subunits: a(1), b(2) and c(10-14). The alpha and beta chains form an alternating ring which encloses part of the gamma chain. F(1) is attached to F(0) by a central stalk formed by the gamma and epsilon chains, while a peripheral stalk is formed by the delta and b chains.

Its subcellular location is the cell membrane. Functionally, f(1)F(0) ATP synthase produces ATP from ADP in the presence of a proton or sodium gradient. F-type ATPases consist of two structural domains, F(1) containing the extramembraneous catalytic core and F(0) containing the membrane proton channel, linked together by a central stalk and a peripheral stalk. During catalysis, ATP synthesis in the catalytic domain of F(1) is coupled via a rotary mechanism of the central stalk subunits to proton translocation. In terms of biological role, component of the F(0) channel, it forms part of the peripheral stalk, linking F(1) to F(0). This Bacillus thuringiensis (strain Al Hakam) protein is ATP synthase subunit b.